We begin with the raw amino-acid sequence, 186 residues long: dTTP/UTP pyrophosphatase (186 aa).

The active-site Proton acceptor is D66.

The protein belongs to the Maf family. YhdE subfamily. Requires a divalent metal cation as cofactor.

The protein resides in the cytoplasm. The catalysed reaction is dTTP + H2O = dTMP + diphosphate + H(+). It carries out the reaction UTP + H2O = UMP + diphosphate + H(+). Its function is as follows. Nucleoside triphosphate pyrophosphatase that hydrolyzes dTTP and UTP. May have a dual role in cell division arrest and in preventing the incorporation of modified nucleotides into cellular nucleic acids. This Pyrococcus horikoshii (strain ATCC 700860 / DSM 12428 / JCM 9974 / NBRC 100139 / OT-3) protein is dTTP/UTP pyrophosphatase.